The following is a 115-amino-acid chain: Insulin (115 aa).

Positions 1-22 are cleaved as a signal peptide; it reads MAALWLQSVSLLVLMLVSWSGS. 3 disulfides stabilise this stretch: C32–C101, C44–C114, and C100–C105. Residues 56–92 constitute a propeptide, c peptide; the sequence is DVDPLLGFLPAKSGGAAAGGENEVAEFAFKDQMEMMV.

This sequence belongs to the insulin family. In terms of assembly, heterodimer of a B chain and an A chain linked by two disulfide bonds.

The protein localises to the secreted. In terms of biological role, insulin decreases blood glucose concentration. It increases cell permeability to monosaccharides, amino acids and fatty acids. It accelerates glycolysis, the pentose phosphate cycle, and glycogen synthesis in liver. The sequence is that of Insulin (ins) from Verasper moseri (Barfin flounder).